The chain runs to 533 residues: Atypical kinase COQ8B, mitochondrial (533 aa).

Residues 93 to 109 (LASFGGLAVGLGLGALA) traverse the membrane as a helical segment. The KxGQ motif signature appears at 156-159 (KIGQ). A Protein kinase domain is found at 192–424 (MMRVLEEELG…DRVLQKSQDL (233 aa)). The AAAS motif signature appears at 217–220 (AAAS). ATP is bound by residues Ser220, Lys238, and 325-328 (MELA). Asp368 functions as the Proton acceptor in the catalytic mechanism. ATP is bound by residues Asn373 and Asp387.

The protein belongs to the protein kinase superfamily. ADCK protein kinase family. Homodimer; homodimerizes via its transmembrane region. Interacts with COQ6 and COQ7. Interacts with the multi-subunit COQ enzyme complex, composed of at least COQ3, COQ4, COQ5, COQ6, COQ7 and COQ9.

It is found in the mitochondrion membrane. The protein localises to the cytoplasm. The protein resides in the cytosol. It localises to the cell membrane. The protein operates within cofactor biosynthesis; ubiquinone biosynthesis. Its function is as follows. Atypical kinase involved in the biosynthesis of coenzyme Q, also named ubiquinone, an essential lipid-soluble electron transporter for aerobic cellular respiration. Its substrate specificity is still unclear: may act as a protein kinase that mediates phosphorylation of COQ3. According to other reports, acts as a small molecule kinase, possibly a lipid kinase that phosphorylates a prenyl lipid in the ubiquinone biosynthesis pathway, as suggested by its ability to bind coenzyme Q lipid intermediates. However, the small molecule kinase activity was not confirmed by another publication. Required for podocyte migration. The polypeptide is Atypical kinase COQ8B, mitochondrial (Mus musculus (Mouse)).